Reading from the N-terminus, the 159-residue chain is 17 kDa surface antigen (159 aa).

The N-terminal stretch at 1–19 (MKLLSKIMIIALAASMLQA) is a signal peptide. Cysteine 20 is lipidated: N-palmitoyl cysteine. Cysteine 20 carries S-diacylglycerol cysteine lipidation.

This sequence belongs to the rickettsiale 17 kDa surface antigen family.

It is found in the cell outer membrane. The sequence is that of 17 kDa surface antigen (omp) from Rickettsia felis (strain ATCC VR-1525 / URRWXCal2) (Rickettsia azadi).